The primary structure comprises 73 residues: Mu-conotoxin PIIIA (73 aa).

Positions 1-19 (MSKLGVLLTICLLLFPITA) are cleaved as a signal peptide. Residues 20–49 (LPMDGDQPADRLAERMQDNISSEEHPFEKR) constitute a propeptide that is removed on maturation. Q50 carries the pyrrolidone carboxylic acid modification. Cystine bridges form between C53–C65, C53–C70, C54–C70, C54–C71, C60–C65, and C60–C71. At P57 the chain carries 4-hydroxyproline. P67 is modified (4-hydroxyproline). C71 carries the post-translational modification Cysteine amide.

Belongs to the conotoxin M superfamily. In terms of processing, 3D-structure of 3 disulfide-bond connectivities isomers is described (PIIIA-1 (C1-C5, C2-C6, C3-C4), PIIIA-2 (C1-C4, C2-C5, C3-C6) and PIIIA-3 (C1-C2, C3-C4, C5-C6)). Only PIIIA-2 contains the cysteine connectivity described as typical for native mu-conotoxins. However, PIIIA-1 is more potent than PIIIA-2, suggesting another possible disulfid connectivity. For this reason, both connectivities have been indicated in features. In terms of tissue distribution, expressed by the venom duct.

It is found in the secreted. Functionally, mu-conotoxins block voltage-gated sodium channels (Nav). This toxin potently blocks rNav1.4/SCN4A (IC(50)=36-41 nM). It also moderately blocks rNav1.1/SCN1A (IC(50)=120 nM), rNav1.2/SCN2A (IC(50)=620 nM), rNav1.3/SCN3A (IC(50)=3.2 uM), mNav1.6/SCN8A (IC(50)=100 nM). This inhibition is reversible. The block of Nav1.1, Nav1.2, and Nav1.6 is modified when beta-subunits are coexpressed with alpha subunits. Hence, blocks of channels containing the beta-1 and beta-3 subunits are more potent (compared to channels without beta subunits), whereas blocks of channels containing the beta-2 and beta-4 are less potent (compared to channels without beta subunits). In vivo, this peptide causes flaccid paralysis in both mice and fish. The protein is Mu-conotoxin PIIIA of Conus purpurascens (Purple cone).